A 606-amino-acid chain; its full sequence is Vacuolar calcium ion transporter (606 aa).

The disordered stretch occupies residues Met-1–Met-110. The Cytoplasmic portion of the chain corresponds to Met-1–Ala-137. Residues Pro-18–Leu-30 show a composition bias toward low complexity. Polar residues predominate over residues Gln-36 to Ser-56. Residues Ile-138 to Leu-158 form a helical membrane-spanning segment. Over Ala-159–Asp-170 the chain is Vacuolar. Residues Thr-171–Ala-191 traverse the membrane as a helical segment. Over Thr-192–Gly-204 the chain is Cytoplasmic. The helical transmembrane segment at Gly-205–Ile-225 threads the bilayer. Residues Lys-226 to Leu-236 are Vacuolar-facing. A helical transmembrane segment spans residues Val-237 to Val-257. At Arg-258–Asn-272 the chain is on the cytoplasmic side. Residues Ala-273–Ile-293 form a helical membrane-spanning segment. The Vacuolar portion of the chain corresponds to Ser-294–Leu-313. Residues Leu-314 to Phe-334 form a helical membrane-spanning segment. Over Gln-335–Asn-437 the chain is Cytoplasmic. The segment at Asp-376–Pro-434 is disordered. Residues Glu-423–Thr-433 show a composition bias toward acidic residues. The chain crosses the membrane as a helical span at residues Val-438–Phe-458. The Vacuolar segment spans residues Leu-459–Trp-477. Residues Val-478–Val-498 form a helical membrane-spanning segment. Over Ser-499–Asp-505 the chain is Cytoplasmic. A helical membrane pass occupies residues Leu-506–Ile-526. At Glu-527–Lys-535 the chain is on the vacuolar side. Residues Pro-536 to Val-556 traverse the membrane as a helical segment. Over Asn-557 to Asn-566 the chain is Cytoplasmic. A helical membrane pass occupies residues Trp-567–Tyr-587. At Pro-588–Gly-606 the chain is on the vacuolar side.

The protein belongs to the Ca(2+):cation antiporter (CaCA) (TC 2.A.19) family.

It localises to the vacuole membrane. Its function is as follows. Has a role in promoting intracellular calcium ion sequestration via the exchange of calcium ions for hydrogen ions across the vacuolar membrane. In Cryptococcus neoformans var. grubii serotype A (strain H99 / ATCC 208821 / CBS 10515 / FGSC 9487) (Filobasidiella neoformans var. grubii), this protein is Vacuolar calcium ion transporter.